A 131-amino-acid polypeptide reads, in one-letter code: Large ribosomal subunit protein bL19 (131 aa).

The interval 112–131 (KSARIAERAGGPKASASTEA) is disordered.

The protein belongs to the bacterial ribosomal protein bL19 family.

In terms of biological role, this protein is located at the 30S-50S ribosomal subunit interface and may play a role in the structure and function of the aminoacyl-tRNA binding site. This Caulobacter vibrioides (strain ATCC 19089 / CIP 103742 / CB 15) (Caulobacter crescentus) protein is Large ribosomal subunit protein bL19.